A 664-amino-acid chain; its full sequence is Methionine--tRNA ligase (664 aa).

The 'HIGH' region signature appears at 13–23 (PYTNGPCHLGH). Cys-144, Cys-147, Cys-156, and Cys-160 together coordinate Zn(2+). The 'KMSKS' region signature appears at 327–331 (KFSKS). An ATP-binding site is contributed by Lys-330. The tRNA-binding domain occupies 566–664 (EFAKVEMKTG…TPVPSGTKIR (99 aa)).

It belongs to the class-I aminoacyl-tRNA synthetase family. MetG type 1 subfamily. Homodimer. Requires Zn(2+) as cofactor.

The protein resides in the cytoplasm. The enzyme catalyses tRNA(Met) + L-methionine + ATP = L-methionyl-tRNA(Met) + AMP + diphosphate. Functionally, is required not only for elongation of protein synthesis but also for the initiation of all mRNA translation through initiator tRNA(fMet) aminoacylation. This Methanospirillum hungatei JF-1 (strain ATCC 27890 / DSM 864 / NBRC 100397 / JF-1) protein is Methionine--tRNA ligase.